The primary structure comprises 101 residues: TrfB transcriptional repressor protein (101 aa).

Residues 37–56 (QATFATSLGLTRGAVSQAVH) constitute a DNA-binding region (H-T-H motif).

In terms of biological role, in conjunction with KorB, inhibits the transcription of kilA, trfA and korAB operons. In conjunction with KorC is responsible for the negative control of kilC and kilE operons. In Escherichia coli, this protein is TrfB transcriptional repressor protein (trfB).